The following is a 152-amino-acid chain: Cytochrome c-type biogenesis protein CcmE 2 (152 aa).

The Cytoplasmic segment spans residues 1–8 (MNPQRRRR). A helical; Signal-anchor for type II membrane protein transmembrane segment spans residues 9-29 (LWLVLALVLAGGLATTLVAMA). Residues 30-152 (LQRNVAYLYT…HQVAPAKVTQ (123 aa)) lie on the Periplasmic side of the membrane. Residues H123 and Y127 each contribute to the heme site.

Belongs to the CcmE/CycJ family.

It localises to the cell inner membrane. In terms of biological role, heme chaperone required for the biogenesis of c-type cytochromes. Transiently binds heme delivered by CcmC and transfers the heme to apo-cytochromes in a process facilitated by CcmF and CcmH. In Xanthomonas campestris pv. campestris (strain 8004), this protein is Cytochrome c-type biogenesis protein CcmE 2.